The sequence spans 156 residues: Small ribosomal subunit protein uS7 (156 aa).

Belongs to the universal ribosomal protein uS7 family. As to quaternary structure, part of the 30S ribosomal subunit. Contacts proteins S9 and S11.

Functionally, one of the primary rRNA binding proteins, it binds directly to 16S rRNA where it nucleates assembly of the head domain of the 30S subunit. Is located at the subunit interface close to the decoding center, probably blocks exit of the E-site tRNA. In Maricaulis maris (strain MCS10) (Caulobacter maris), this protein is Small ribosomal subunit protein uS7.